The following is a 238-amino-acid chain: uncharacterized protein (238 aa).

The disordered stretch occupies residues 219 to 238; that stretch reads EESINNNVDDTDDIDNDNFI. Residues 227-238 show a composition bias toward acidic residues; the sequence is DDTDDIDNDNFI.

This is an uncharacterized protein from Buchnera aphidicola subsp. Acyrthosiphon pisum (strain APS) (Acyrthosiphon pisum symbiotic bacterium).